An 879-amino-acid polypeptide reads, in one-letter code: Alanine--tRNA ligase (879 aa).

Residues His-566, His-570, Cys-668, and His-672 each contribute to the Zn(2+) site.

The protein belongs to the class-II aminoacyl-tRNA synthetase family. Zn(2+) serves as cofactor.

The protein resides in the cytoplasm. It catalyses the reaction tRNA(Ala) + L-alanine + ATP = L-alanyl-tRNA(Ala) + AMP + diphosphate. Catalyzes the attachment of alanine to tRNA(Ala) in a two-step reaction: alanine is first activated by ATP to form Ala-AMP and then transferred to the acceptor end of tRNA(Ala). Also edits incorrectly charged Ser-tRNA(Ala) and Gly-tRNA(Ala) via its editing domain. The polypeptide is Alanine--tRNA ligase (Listeria monocytogenes serovar 1/2a (strain ATCC BAA-679 / EGD-e)).